We begin with the raw amino-acid sequence, 236 residues long: tRNA1(Val) (adenine(37)-N6)-methyltransferase (236 aa).

It belongs to the methyltransferase superfamily. tRNA (adenine-N(6)-)-methyltransferase family.

The protein localises to the cytoplasm. The enzyme catalyses adenosine(37) in tRNA1(Val) + S-adenosyl-L-methionine = N(6)-methyladenosine(37) in tRNA1(Val) + S-adenosyl-L-homocysteine + H(+). Functionally, specifically methylates the adenine in position 37 of tRNA(1)(Val) (anticodon cmo5UAC). The sequence is that of tRNA1(Val) (adenine(37)-N6)-methyltransferase from Aeromonas hydrophila subsp. hydrophila (strain ATCC 7966 / DSM 30187 / BCRC 13018 / CCUG 14551 / JCM 1027 / KCTC 2358 / NCIMB 9240 / NCTC 8049).